The sequence spans 286 residues: Bifunctional protein FolD (286 aa).

Residues 168 to 170 (GRG), Thr-195, and Val-236 contribute to the NADP(+) site.

The protein belongs to the tetrahydrofolate dehydrogenase/cyclohydrolase family. Homodimer.

The enzyme catalyses (6R)-5,10-methylene-5,6,7,8-tetrahydrofolate + NADP(+) = (6R)-5,10-methenyltetrahydrofolate + NADPH. It catalyses the reaction (6R)-5,10-methenyltetrahydrofolate + H2O = (6R)-10-formyltetrahydrofolate + H(+). The protein operates within one-carbon metabolism; tetrahydrofolate interconversion. Its function is as follows. Catalyzes the oxidation of 5,10-methylenetetrahydrofolate to 5,10-methenyltetrahydrofolate and then the hydrolysis of 5,10-methenyltetrahydrofolate to 10-formyltetrahydrofolate. The chain is Bifunctional protein FolD from Mycolicibacterium gilvum (strain PYR-GCK) (Mycobacterium gilvum (strain PYR-GCK)).